The sequence spans 288 residues: Bifunctional protein FolD (288 aa).

166–168 (GRS) is an NADP(+) binding site.

The protein belongs to the tetrahydrofolate dehydrogenase/cyclohydrolase family. Homodimer.

The catalysed reaction is (6R)-5,10-methylene-5,6,7,8-tetrahydrofolate + NADP(+) = (6R)-5,10-methenyltetrahydrofolate + NADPH. The enzyme catalyses (6R)-5,10-methenyltetrahydrofolate + H2O = (6R)-10-formyltetrahydrofolate + H(+). It functions in the pathway one-carbon metabolism; tetrahydrofolate interconversion. Functionally, catalyzes the oxidation of 5,10-methylenetetrahydrofolate to 5,10-methenyltetrahydrofolate and then the hydrolysis of 5,10-methenyltetrahydrofolate to 10-formyltetrahydrofolate. The chain is Bifunctional protein FolD from Levilactobacillus brevis (strain ATCC 367 / BCRC 12310 / CIP 105137 / JCM 1170 / LMG 11437 / NCIMB 947 / NCTC 947) (Lactobacillus brevis).